Reading from the N-terminus, the 335-residue chain is UPF0353 protein Mflv_3659 (335 aa).

Transmembrane regions (helical) follow at residues 18–38 and 67–87; these read WFFLFFFVVIGLVALYIVVQL and LPAVLMILSLVSFTIAMAGPT. Residues 98–294 enclose the VWFA domain; it reads VVMLVIDVSQ…EQLKQVFTNL (197 aa). Residues 309-329 traverse the membrane as a helical segment; the sequence is VGWLRLGAGVLALAALGALLI.

The protein belongs to the UPF0353 family.

The protein resides in the cell membrane. This is UPF0353 protein Mflv_3659 from Mycolicibacterium gilvum (strain PYR-GCK) (Mycobacterium gilvum (strain PYR-GCK)).